The chain runs to 361 residues: MKILITGGAGFIGSAVVRHIIKNTQDTVVNIDKLTYAGNLESLSDISESNRYNFEHADICDSAEITRIFEQYQPDAVMHLAAESHVDRSITGPAAFIETNIVGTYALLEVARKYWSALGEDKKNNFRFHHISTDEVYGDLPHPDEVENSVTLPLFTETTAYAPSSPYSASKASSDHLVRAWRRTYGLPTIVTNCSNNYGPYHFPEKLIPLVILNALEGKPLPIYGKGDQIRDWLYVEDHARALHMVVTEGKAGETYNIGGHNEKKNLDVVFTICDLLDEIVPKATSYREQITYVADRPGHDRRYAIDAGKISRELGWKPLETFESGIRKTVEWYLANTQWVNNVKSGAYQSWIEQNYEGRQ.

Residues 11-12 (FI), 32-35 (DKLT), 58-59 (DI), 80-84 (LAAES), and T99 each bind NAD(+). S84 lines the substrate pocket. A substrate-binding site is contributed by T133. Residue D134 is the Proton donor of the active site. Catalysis depends on proton acceptor residues E135 and Y167. Residue 167–171 (YSASK) participates in NAD(+) binding. Position 196 (N196) interacts with substrate. N197 lines the NAD(+) pocket. Substrate-binding positions include 206–207 (KL), 222–224 (PIY), R231, N266, 296–300 (DRPGH), and Y357.

The protein belongs to the NAD(P)-dependent epimerase/dehydratase family. dTDP-glucose dehydratase subfamily. In terms of assembly, homodimer. The cofactor is NAD(+).

The enzyme catalyses dTDP-alpha-D-glucose = dTDP-4-dehydro-6-deoxy-alpha-D-glucose + H2O. It participates in carbohydrate biosynthesis; dTDP-L-rhamnose biosynthesis. It functions in the pathway bacterial outer membrane biogenesis; LPS O-antigen biosynthesis. Its function is as follows. Catalyzes the dehydration of dTDP-D-glucose to form dTDP-6-deoxy-D-xylo-4-hexulose via a three-step process involving oxidation, dehydration and reduction. The chain is dTDP-glucose 4,6-dehydratase from Salmonella typhimurium (strain LT2 / SGSC1412 / ATCC 700720).